Here is a 285-residue protein sequence, read N- to C-terminus: UPF0014 membrane protein STAR2 (285 aa).

7 helical membrane-spanning segments follow: residues 30–50 (FLVG…AVAL), 64–84 (YAMA…QFIF), 88–108 (SAAW…YTAG), 119–139 (HIAA…LVAL), 148–168 (YIIP…GVTM), 203–225 (SLVI…ALPG), and 240–262 (AIQL…SILS).

This sequence belongs to the UPF0014 family. As to quaternary structure, interacts with STAR2. Expressed in roots.

It is found in the membrane. Functionally, associates with STAR2 to form a functional transmembrane ABC transporter required for detoxification of aluminum (Al) in roots. Can specifically transport UDP-glucose. The sequence is that of UPF0014 membrane protein STAR2 from Oryza sativa subsp. japonica (Rice).